We begin with the raw amino-acid sequence, 346 residues long: Glycosyltransferase 1 domain-containing protein 1 (346 aa).

The N-terminal stretch at 1-16 is a signal peptide; it reads MRLLFLAVLRPHTGNA.

It belongs to the glycosyltransferase group 1 family. Glycosyltransferase 4 subfamily.

The protein resides in the secreted. The polypeptide is Glycosyltransferase 1 domain-containing protein 1 (GLT1D1) (Homo sapiens (Human)).